Consider the following 220-residue polypeptide: Glutamine amidotransferase-like class 1 domain-containing protein 1 (220 aa).

Positions 1 to 35 (MASERLPSRPACLLVASGAAEGVSAQSFLHCFTLA) are cleaved as a signal peptide. 2 N-linked (GlcNAc...) asparagine glycosylation sites follow: Asn57 and Asn201.

Belongs to the peptidase C56 family. Homotetramer. Component of the FERRY complex composed of five subunits, TBCK, PPP1R21, FERRY3, CRYZL1 and GATD1 with a ratio of 1:2:1:2:4, respectively.

The protein localises to the secreted. It is found in the early endosome. Functionally, component of the FERRY complex (Five-subunit Endosomal Rab5 and RNA/ribosome intermediary). The FERRY complex directly interacts with mRNAs and RAB5A, and functions as a RAB5A effector involved in the localization and the distribution of specific mRNAs most likely by mediating their endosomal transport. The complex recruits mRNAs and ribosomes to early endosomes through direct mRNA-interaction. This chain is Glutamine amidotransferase-like class 1 domain-containing protein 1, found in Bos taurus (Bovine).